A 251-amino-acid polypeptide reads, in one-letter code: Triosephosphate isomerase (251 aa).

9-11 provides a ligand contact to substrate; it reads NWK. His95 acts as the Electrophile in catalysis. The Proton acceptor role is filled by Glu167. Residues Gly173, Ser213, and 234 to 235 each bind substrate; that span reads GG. Phosphoserine is present on Ser213.

Belongs to the triosephosphate isomerase family. Homodimer.

The protein localises to the cytoplasm. The enzyme catalyses D-glyceraldehyde 3-phosphate = dihydroxyacetone phosphate. The protein operates within carbohydrate biosynthesis; gluconeogenesis. It participates in carbohydrate degradation; glycolysis; D-glyceraldehyde 3-phosphate from glycerone phosphate: step 1/1. Functionally, involved in the gluconeogenesis. Catalyzes stereospecifically the conversion of dihydroxyacetone phosphate (DHAP) to D-glyceraldehyde-3-phosphate (G3P). The chain is Triosephosphate isomerase from Bacillus cereus (strain ATCC 10987 / NRS 248).